A 240-amino-acid polypeptide reads, in one-letter code: Protein OXIDATIVE STRESS 3 LIKE 4 (240 aa).

The interval 1-128 (MELMAKPTFS…SKSFGNLGEI (128 aa)) is disordered. A compositionally biased stretch (polar residues) spans 51-66 (WSGQTADYSSDSSSIG). Residues 70–84 (DSEEDEEESENENDD) are compositionally biased toward acidic residues. The short motif at 142 to 150 (NKRRRLQIC) is the Nuclear localization signal element. The tract at residues 163–207 (NPKSMPLLPVNEDEDDDDEDDDEEDLKSGFDENKSSSDEEGVKKV) is disordered. Residues 173–187 (NEDEDDDDEDDDEED) show a composition bias toward acidic residues. The span at 188–205 (LKSGFDENKSSSDEEGVK) shows a compositional bias: basic and acidic residues. Residues 202–229 (EGVKKVVVRKGSFKNRAYKSRSCFALSD) form a kinase-inducible domain (KID) region. Position 213 is a phosphoserine (S213).

As to quaternary structure, interacts with HDA19; Ser-213 is critical for this interaction.

The protein localises to the nucleus. In terms of biological role, transcription activator which may regulates gene expression through interaction with the histone deacetylase HDA19. Promotes slightly the tolerance to cadmium (Cd) and to oxidizing chemicals (e.g. diamide and tert-butyl hydroperoxide (t-BOOH)). The chain is Protein OXIDATIVE STRESS 3 LIKE 4 from Arabidopsis thaliana (Mouse-ear cress).